We begin with the raw amino-acid sequence, 119 residues long: Small ribosomal subunit protein uS13 (119 aa).

Residues 92–110 (RKDTCKRSTKKNARTRKGP) are compositionally biased toward basic residues. The segment at 92–119 (RKDTCKRSTKKNARTRKGPKKDNRWKER) is disordered.

This sequence belongs to the universal ribosomal protein uS13 family. In terms of assembly, part of the 30S ribosomal subunit. Forms a loose heterodimer with protein S19. Forms two bridges to the 50S subunit in the 70S ribosome.

Its function is as follows. Located at the top of the head of the 30S subunit, it contacts several helices of the 16S rRNA. In the 70S ribosome it contacts the 23S rRNA (bridge B1a) and protein L5 of the 50S subunit (bridge B1b), connecting the 2 subunits; these bridges are implicated in subunit movement. Contacts the tRNAs in the A and P-sites. This chain is Small ribosomal subunit protein uS13, found in Mycoplasma sp.